Reading from the N-terminus, the 699-residue chain is Polyribonucleotide nucleotidyltransferase (699 aa).

2 residues coordinate Mg(2+): Asp-485 and Asp-491. Residues 552–611 (PRITVIKINPEKIRDVIGKGGAVIRALTEETGTTIELEDDGTVKIASSNGEATKEAIRRI) form the KH domain. Residues 621 to 689 (GRIYNGKVIR…RQGRVRLSIK (69 aa)) enclose the S1 motif domain.

It belongs to the polyribonucleotide nucleotidyltransferase family. Component of the RNA degradosome, which is a multiprotein complex involved in RNA processing and mRNA degradation. It depends on Mg(2+) as a cofactor.

The protein resides in the cytoplasm. The enzyme catalyses RNA(n+1) + phosphate = RNA(n) + a ribonucleoside 5'-diphosphate. Its function is as follows. Involved in mRNA degradation. Catalyzes the phosphorolysis of single-stranded polyribonucleotides processively in the 3'- to 5'-direction. This Shewanella baltica (strain OS223) protein is Polyribonucleotide nucleotidyltransferase.